A 406-amino-acid chain; its full sequence is Homocysteine-responsive endoplasmic reticulum-resident ubiquitin-like domain member 2 protein (406 aa).

The Ubiquitin-like domain occupies 10–89; it reads VTLIIKAPNQ…HMVHLVCTSR (80 aa). The interval 86-154 is disordered; that stretch reads CTSRTPPSSP…TLPQAQTDQA (69 aa). Composition is skewed to low complexity over residues 87–98 and 106–126; these read TSRTPPSSPKSS and ALASSSNSSSDHSGSTTPSSG. Positions 127-154 are enriched in polar residues; sequence QETLSLAVGSSSEGLRQRTLPQAQTDQA. A helical membrane pass occupies residues 302-322; that stretch reads FIMVMGAMLLVYLHQAGWFPF.

The protein localises to the membrane. Functionally, could be involved in the unfolded protein response (UPR) pathway. The polypeptide is Homocysteine-responsive endoplasmic reticulum-resident ubiquitin-like domain member 2 protein (HERPUD2) (Homo sapiens (Human)).